The chain runs to 258 residues: 5'-nucleotidase SurE (258 aa).

A divalent metal cation is bound by residues D18, D19, S49, and N102.

It belongs to the SurE nucleotidase family. A divalent metal cation serves as cofactor.

The protein resides in the cytoplasm. It catalyses the reaction a ribonucleoside 5'-phosphate + H2O = a ribonucleoside + phosphate. Its function is as follows. Nucleotidase that shows phosphatase activity on nucleoside 5'-monophosphates. The sequence is that of 5'-nucleotidase SurE from Vibrio campbellii (strain ATCC BAA-1116).